Consider the following 282-residue polypeptide: DNA-directed RNA polymerase III subunit RPC5 (282 aa).

The disordered stretch occupies residues 1 to 70; sequence MSIDNKLFVT…TGEEEEDDPV (70 aa). Acidic residues-rich tracts occupy residues 10–35 and 60–70; these read TEEDEEDRTQDRADVEDESNDIDMIA and DTGEEEEDDPV. Position 61 is a phosphothreonine (Thr61).

In terms of assembly, component of the RNA polymerase III (Pol III) complex consisting of 17 subunits. Interacts with RPC53/RPC4. RPC53/RPC4, RPC37/RPC5 and RPC11/RPC10 probably form a Pol III subcomplex.

It is found in the nucleus. DNA-dependent RNA polymerase catalyzes the transcription of DNA into RNA using the four ribonucleoside triphosphates as substrates. Specific peripheric component of RNA polymerase III which synthesizes small RNAs, such as 5S rRNA and tRNAs. The RPC53/RPC4-RPC37/RPC5 subcomplex is required for terminator recognition and reinitiation. In Saccharomyces cerevisiae (strain ATCC 204508 / S288c) (Baker's yeast), this protein is DNA-directed RNA polymerase III subunit RPC5 (RPC37).